A 271-amino-acid polypeptide reads, in one-letter code: Acetyl-coenzyme A carboxylase carboxyl transferase subunit alpha (271 aa).

One can recognise a CoA carboxyltransferase C-terminal domain in the interval 1 to 247; it reads MSRELIRTAD…KKTILEALGE (247 aa).

The protein belongs to the AccA family. In terms of assembly, acetyl-CoA carboxylase is a heterohexamer composed of biotin carboxyl carrier protein (AccB), biotin carboxylase (AccC) and two subunits each of ACCase subunit alpha (AccA) and ACCase subunit beta (AccD).

Its subcellular location is the cytoplasm. It carries out the reaction N(6)-carboxybiotinyl-L-lysyl-[protein] + acetyl-CoA = N(6)-biotinyl-L-lysyl-[protein] + malonyl-CoA. The protein operates within lipid metabolism; malonyl-CoA biosynthesis; malonyl-CoA from acetyl-CoA: step 1/1. Functionally, component of the acetyl coenzyme A carboxylase (ACC) complex. First, biotin carboxylase catalyzes the carboxylation of biotin on its carrier protein (BCCP) and then the CO(2) group is transferred by the carboxyltransferase to acetyl-CoA to form malonyl-CoA. The polypeptide is Acetyl-coenzyme A carboxylase carboxyl transferase subunit alpha (Clostridium perfringens (strain ATCC 13124 / DSM 756 / JCM 1290 / NCIMB 6125 / NCTC 8237 / Type A)).